The following is a 468-amino-acid chain: Probable citrate synthase, mitochondrial (468 aa).

Catalysis depends on residues His303, His349, and Asp404.

It belongs to the citrate synthase family. As to quaternary structure, homodimer.

Its subcellular location is the mitochondrion matrix. It catalyses the reaction oxaloacetate + acetyl-CoA + H2O = citrate + CoA + H(+). The protein operates within carbohydrate metabolism; tricarboxylic acid cycle; isocitrate from oxaloacetate: step 1/2. This chain is Probable citrate synthase, mitochondrial (cts-1), found in Caenorhabditis briggsae.